A 358-amino-acid polypeptide reads, in one-letter code: UDP-N-acetylglucosamine--N-acetylmuramyl-(pentapeptide) pyrophosphoryl-undecaprenol N-acetylglucosamine transferase (358 aa).

UDP-N-acetyl-alpha-D-glucosamine-binding positions include 11-13, Asn-125, Arg-162, Ser-196, and Gln-288; that span reads TAG.

Belongs to the glycosyltransferase 28 family. MurG subfamily.

The protein localises to the cell membrane. It carries out the reaction di-trans,octa-cis-undecaprenyl diphospho-N-acetyl-alpha-D-muramoyl-L-alanyl-D-glutamyl-meso-2,6-diaminopimeloyl-D-alanyl-D-alanine + UDP-N-acetyl-alpha-D-glucosamine = di-trans,octa-cis-undecaprenyl diphospho-[N-acetyl-alpha-D-glucosaminyl-(1-&gt;4)]-N-acetyl-alpha-D-muramoyl-L-alanyl-D-glutamyl-meso-2,6-diaminopimeloyl-D-alanyl-D-alanine + UDP + H(+). Its pathway is cell wall biogenesis; peptidoglycan biosynthesis. In terms of biological role, cell wall formation. Catalyzes the transfer of a GlcNAc subunit on undecaprenyl-pyrophosphoryl-MurNAc-pentapeptide (lipid intermediate I) to form undecaprenyl-pyrophosphoryl-MurNAc-(pentapeptide)GlcNAc (lipid intermediate II). This chain is UDP-N-acetylglucosamine--N-acetylmuramyl-(pentapeptide) pyrophosphoryl-undecaprenol N-acetylglucosamine transferase, found in Leifsonia xyli subsp. xyli (strain CTCB07).